The chain runs to 502 residues: Glycerol kinase (502 aa).

An ADP-binding site is contributed by Thr14. ATP contacts are provided by Thr14, Thr15, and Ser16. Thr14 lines the sn-glycerol 3-phosphate pocket. Arg18 provides a ligand contact to ADP. Arg84, Glu85, Tyr136, and Asp246 together coordinate sn-glycerol 3-phosphate. Arg84, Glu85, Tyr136, Asp246, and Gln247 together coordinate glycerol. Positions 268 and 311 each coordinate ADP. The ATP site is built by Thr268, Gly311, Gln315, and Gly412. ADP contacts are provided by Gly412 and Asn416.

It belongs to the FGGY kinase family. Homotetramer and homodimer (in equilibrium). Heterodimer with EIIA-Glc. Binds 1 zinc ion per glycerol kinase EIIA-Glc dimer. The zinc ion is important for dimerization.

The enzyme catalyses glycerol + ATP = sn-glycerol 3-phosphate + ADP + H(+). Its pathway is polyol metabolism; glycerol degradation via glycerol kinase pathway; sn-glycerol 3-phosphate from glycerol: step 1/1. Activity of this regulatory enzyme is affected by several metabolites. Allosterically and non-competitively inhibited by fructose 1,6-bisphosphate (FBP) and unphosphorylated phosphocarrier protein EIIA-Glc (III-Glc), an integral component of the bacterial phosphotransferase (PTS) system. Functionally, key enzyme in the regulation of glycerol uptake and metabolism. Catalyzes the phosphorylation of glycerol to yield sn-glycerol 3-phosphate. This chain is Glycerol kinase, found in Escherichia coli (strain ATCC 8739 / DSM 1576 / NBRC 3972 / NCIMB 8545 / WDCM 00012 / Crooks).